Reading from the N-terminus, the 336-residue chain is Probable deoxyhypusine synthase (336 aa).

The active-site Nucleophile is the Lys308.

Belongs to the deoxyhypusine synthase family. The cofactor is NAD(+).

It catalyses the reaction [eIF5A protein]-L-lysine + spermidine = [eIF5A protein]-deoxyhypusine + propane-1,3-diamine. It participates in protein modification; eIF5A hypusination. Catalyzes the NAD-dependent oxidative cleavage of spermidine and the subsequent transfer of the butylamine moiety of spermidine to the epsilon-amino group of a specific lysine residue of the eIF-5A precursor protein to form the intermediate deoxyhypusine residue. The protein is Probable deoxyhypusine synthase of Thermococcus gammatolerans (strain DSM 15229 / JCM 11827 / EJ3).